Reading from the N-terminus, the 600-residue chain is Threonine dehydratase, mitochondrial (600 aa).

At lysine 144 the chain carries N6-(pyridoxal phosphate)lysine. 2 ACT-like domains span residues 425 to 497 and 519 to 590; these read VFLS…DISD and RLYR…DETN.

The protein belongs to the serine/threonine dehydratase family. In terms of assembly, homotetramer. It depends on pyridoxal 5'-phosphate as a cofactor.

The protein localises to the mitochondrion. The protein resides in the cytoplasm. It carries out the reaction L-threonine = 2-oxobutanoate + NH4(+). The protein operates within amino-acid biosynthesis; L-isoleucine biosynthesis; 2-oxobutanoate from L-threonine: step 1/1. Isoleucine allosterically inhibits while valine allosterically activates this enzyme. The polypeptide is Threonine dehydratase, mitochondrial (Schizosaccharomyces pombe (strain 972 / ATCC 24843) (Fission yeast)).